The sequence spans 368 residues: E3 ubiquitin-protein ligase E3D (368 aa).

Ala-2 bears the N-acetylalanine mark. A BRAT1-like motif motif is present at residues 129-159; sequence PLPSENWSALVGEWCCHPDPFANRPLHPREN. Zn(2+) is bound at residue Cys-144. Positions 214-236 are interaction with UBE2C; sequence RPSEGSFPNIPRSQFLQSIIAQC. Residues 332–368 form an HECT-like region; it reads LPSATCLELLLILSRNNASLPLSLRQMNSFQVAFLKM.

In terms of assembly, interacts with UBE2C/UbcH10 (E2 ubiquitin-conjugating enzyme). In vitro, interacts with cyclin-B. Ubiquitinated by UBCH10 (E2 ubiquitin-conjugating enzyme).

The protein localises to the cytoplasm. The enzyme catalyses S-ubiquitinyl-[E2 ubiquitin-conjugating enzyme]-L-cysteine + [acceptor protein]-L-lysine = [E2 ubiquitin-conjugating enzyme]-L-cysteine + N(6)-ubiquitinyl-[acceptor protein]-L-lysine.. It participates in protein modification; protein ubiquitination. In terms of biological role, E3 ubiquitin-protein ligase which accepts ubiquitin from specific E2 ubiquitin-conjugating enzymes, and transfers it to substrates, generally promoting their degradation by the proteasome. Independently of its E3 ubiquitin-protein ligase activity, acts as an inhibitor of CPSF3 endonuclease activity by blocking CPSF3 active site. The protein is E3 ubiquitin-protein ligase E3D (Ube3d) of Mus musculus (Mouse).